The chain runs to 95 residues: UPF0473 protein BPUM_2377 (95 aa).

The protein belongs to the UPF0473 family.

In Bacillus pumilus (strain SAFR-032), this protein is UPF0473 protein BPUM_2377.